We begin with the raw amino-acid sequence, 51 residues long: Protein 1.4 (51 aa).

The N-terminal stretch at 1 to 23 (MFKKVGKFLAALAAILTLAYILA) is a signal peptide. The helical transmembrane segment at 28 to 48 (VALVVVGACYLAAVCACVWSI) threads the bilayer.

It localises to the host membrane. The chain is Protein 1.4 from Escherichia coli (Bacteriophage T7).